A 336-amino-acid polypeptide reads, in one-letter code: G-protein coupled receptor homolog FPV027 (336 aa).

Residues Met1–Ser31 are Extracellular-facing. Asn5 is a glycosylation site (N-linked (GlcNAc...) asparagine; by host). The chain crosses the membrane as a helical span at residues Ile32–Ile52. The Cytoplasmic portion of the chain corresponds to Gly53 to Leu63. The chain crosses the membrane as a helical span at residues Leu64 to Val84. Residues Tyr85 to Val101 are Extracellular-facing. Cys99 and Cys178 are oxidised to a cystine. Residues Ser102 to Ile122 form a helical membrane-spanning segment. Over Asp123–Tyr143 the chain is Cytoplasmic. Residues Tyr144–Tyr164 form a helical membrane-spanning segment. Topologically, residues Lys165–Arg200 are extracellular. Asn174 carries an N-linked (GlcNAc...) asparagine; by host glycan. A helical membrane pass occupies residues Phe201–Tyr221. At Lys222–Ser240 the chain is on the cytoplasmic side. The helical transmembrane segment at Ile241 to Gly261 threads the bilayer. Topologically, residues Leu262–Pro276 are extracellular. A helical transmembrane segment spans residues Phe277 to Ile297. Residues Arg298–Arg336 lie on the Cytoplasmic side of the membrane.

It belongs to the G-protein coupled receptor 1 family.

It is found in the host cell membrane. The protein is G-protein coupled receptor homolog FPV027 of Vertebrata (FPV).